Reading from the N-terminus, the 585-residue chain is Rab GTPase-binding effector protein 2 (585 aa).

An N-acetylalanine modification is found at Ala2. Positions Gln27–Pro183 form a coiled coil. Disordered stretches follow at residues Glu178 to Val265, Glu381 to Leu408, and Glu491 to Gln515. Phosphoserine occurs at positions 188, 192, 198, and 202. A coiled-coil region spans residues Asn288–Val540. The span at Glu491–Val501 shows a compositional bias: basic and acidic residues.

This sequence belongs to the rabaptin family. As to quaternary structure, heterodimer with RABGEF1. The dimer binds RAB5A that has been activated by GTP-binding. Interacts with SDCCAG8; this interaction is important for ciliogenesis regulation. Interacts with RAB4; this interaction may mediate VEGFR2 cell surface expression.

The protein localises to the cytoplasm. The protein resides in the early endosome. It is found in the cytoskeleton. It localises to the microtubule organizing center. Its subcellular location is the centrosome. The protein localises to the cilium basal body. Plays a role in membrane trafficking and in homotypic early endosome fusion. Participates in arteriogenesis by regulating vascular endothelial growth factor receptor 2/VEGFR2 cell surface expression and endosomal trafficking. By interacting with SDCCAG8, localizes to centrosomes and plays a critical role in ciliogenesis. This Bos taurus (Bovine) protein is Rab GTPase-binding effector protein 2 (RABEP2).